A 95-amino-acid polypeptide reads, in one-letter code: UPF0473 protein GWCH70_2487 (95 aa).

This sequence belongs to the UPF0473 family.

The sequence is that of UPF0473 protein GWCH70_2487 from Geobacillus sp. (strain WCH70).